The sequence spans 176 residues: 3-hydroxyanthranilate 3,4-dioxygenase (176 aa).

Arginine 44 contributes to the O2 binding site. 3 residues coordinate Fe cation: histidine 48, glutamate 54, and histidine 92. A substrate-binding site is contributed by glutamate 54. Substrate-binding residues include arginine 96 and glutamate 106. The Fe cation site is built by cysteine 121, cysteine 124, cysteine 158, and cysteine 161.

The protein belongs to the 3-HAO family. In terms of assembly, homodimer. The cofactor is Fe(2+).

The enzyme catalyses 3-hydroxyanthranilate + O2 = (2Z,4Z)-2-amino-3-carboxymuconate 6-semialdehyde. It participates in cofactor biosynthesis; NAD(+) biosynthesis; quinolinate from L-kynurenine: step 3/3. Catalyzes the oxidative ring opening of 3-hydroxyanthranilate to 2-amino-3-carboxymuconate semialdehyde, which spontaneously cyclizes to quinolinate. This is 3-hydroxyanthranilate 3,4-dioxygenase from Xanthomonas campestris pv. campestris (strain 8004).